A 325-amino-acid chain; its full sequence is Chain length determinant protein (325 aa).

Residues 1–31 lie on the Cytoplasmic side of the membrane; the sequence is MRVENNNVSGQNHDPEQIDLIDLLVQLWRGK. A helical membrane pass occupies residues 32–52; that stretch reads MTIIISVIVAIALAIGYLAVA. Residues 53–294 are Periplasmic-facing; that stretch reads KEKWTSTAII…LPIRRDSPKK (242 aa). A helical transmembrane segment spans residues 295-315; that stretch reads AITLILAVLLGGMVGAGIVLG. Topologically, residues 316–325 are cytoplasmic; the sequence is RNALRNYNAK.

This sequence belongs to the WzzB/Cld/Rol family.

Its subcellular location is the cell inner membrane. Its pathway is bacterial outer membrane biogenesis; lipopolysaccharide biosynthesis. Confers a modal distribution of chain length on the O-antigen component of lipopolysaccharide (LPS). Gives rise to a reduced number of short chain molecules and increases in numbers of longer molecules, with a modal value of 13 (in strain O111/M92) and of 17 (in strain K12). The polypeptide is Chain length determinant protein (wzzB) (Escherichia coli).